The following is a 106-amino-acid chain: Small ribosomal subunit protein uS10 (106 aa).

This sequence belongs to the universal ribosomal protein uS10 family. Part of the 30S ribosomal subunit.

Functionally, involved in the binding of tRNA to the ribosomes. This is Small ribosomal subunit protein uS10 from Prochlorococcus marinus subsp. pastoris (strain CCMP1986 / NIES-2087 / MED4).